We begin with the raw amino-acid sequence, 1011 residues long: PE-PGRS family protein PE_PGRS30 (1011 aa).

Residues Met1–Ala93 enclose the PE domain. A PGRS domain region spans residues Ser130–Leu696. Positions Gly595 to Leu696 are enriched in gly residues. Positions Gly595–Gly701 are disordered. A C-terminal domain region spans residues Phe697–Pro1011.

Belongs to the mycobacterial PE family. PGRS subfamily.

It is found in the secreted. It localises to the cell wall. Its subcellular location is the cell surface. Its function is as follows. Mediates suppression of pro-inflammatory immune response in macrophages via modulation of host cytokine response. Required for full virulence. Involved in inhibition of phago-lysosome fusion. The protein is PE-PGRS family protein PE_PGRS30 of Mycobacterium tuberculosis (strain ATCC 25618 / H37Rv).